We begin with the raw amino-acid sequence, 86 residues long: Bacteriocin thailandicin (86 aa).

Positions 23 to 86 (LTANLGISSY…KYGAKYSAAW (64 aa)) form a cross-link, cyclopeptide (Leu-Trp).

Its subcellular location is the secreted. Its function is as follows. Cyclopeptide antibiotic with bacteriolytic activity against the Gram-positive bacteria S.aureus and S.thermophilus, and lower activity against the Gram-negative bacteria E.coli and P.aeruginosa. This chain is Bacteriocin thailandicin, found in Enterococcus thailandicus.